A 697-amino-acid polypeptide reads, in one-letter code: DNA ligase (697 aa).

NAD(+) is bound by residues 34-38, 83-84, and Glu114; these read DKTYD and SL. The N6-AMP-lysine intermediate role is filled by Lys116. Positions 137, 171, 315, and 339 each coordinate NAD(+). Positions 430, 433, 448, and 453 each coordinate Zn(2+). One can recognise a BRCT domain in the interval 616-697; that stretch reads KKSSKLNNLN…FHNLLKEENA (82 aa).

The protein belongs to the NAD-dependent DNA ligase family. LigA subfamily. The cofactor is Mg(2+). Mn(2+) is required as a cofactor.

It catalyses the reaction NAD(+) + (deoxyribonucleotide)n-3'-hydroxyl + 5'-phospho-(deoxyribonucleotide)m = (deoxyribonucleotide)n+m + AMP + beta-nicotinamide D-nucleotide.. DNA ligase that catalyzes the formation of phosphodiester linkages between 5'-phosphoryl and 3'-hydroxyl groups in double-stranded DNA using NAD as a coenzyme and as the energy source for the reaction. It is essential for DNA replication and repair of damaged DNA. The chain is DNA ligase from Mycoplasmopsis synoviae (strain 53) (Mycoplasma synoviae).